Consider the following 284-residue polypeptide: Ribosomal RNA small subunit methyltransferase A (284 aa).

The S-adenosyl-L-methionine site is built by Asn-26, Leu-28, Gly-53, Glu-74, Asp-97, and Asn-127.

Belongs to the class I-like SAM-binding methyltransferase superfamily. rRNA adenine N(6)-methyltransferase family. RsmA subfamily.

It localises to the cytoplasm. The catalysed reaction is adenosine(1518)/adenosine(1519) in 16S rRNA + 4 S-adenosyl-L-methionine = N(6)-dimethyladenosine(1518)/N(6)-dimethyladenosine(1519) in 16S rRNA + 4 S-adenosyl-L-homocysteine + 4 H(+). In terms of biological role, specifically dimethylates two adjacent adenosines (A1518 and A1519) in the loop of a conserved hairpin near the 3'-end of 16S rRNA in the 30S particle. May play a critical role in biogenesis of 30S subunits. The polypeptide is Ribosomal RNA small subunit methyltransferase A (Anaeromyxobacter dehalogenans (strain 2CP-1 / ATCC BAA-258)).